The sequence spans 298 residues: ADP/ATP translocase 1 (298 aa).

Residues 1-7 are Mitochondrial intermembrane-facing; it reads MGDHAWS. Gly-2 bears the N-acetylglycine mark. One copy of the Solcar 1 repeat lies at 6 to 98; that stretch reads WSFLKDFLAG…FAFKDKYKQL (93 aa). Ser-7 carries the post-translational modification Phosphoserine. Residues 8–37 form a helical membrane-spanning segment; the sequence is FLKDFLAGGVAAAVSKTAVAPIERVKLLLQ. The Mitochondrial matrix portion of the chain corresponds to 38–74; it reads VQHASKQISAEKQYKGIIDCVVRIPKEQGFLSFWRGN. Lys-52 carries the N6,N6,N6-trimethyllysine modification. A helical transmembrane segment spans residues 75-99; the sequence is LANVIRYFPTQALNFAFKDKYKQLF. Arg-80 and Lys-92 together coordinate ADP. Over 100-109 the chain is Mitochondrial intermembrane; that stretch reads LGGVDRHKQF. A helical membrane pass occupies residues 110-130; the sequence is WRYFAGNLASGGAAGATSLCF. 2 Solcar repeats span residues 111–201 and 212–297; these read RYFA…AKGM and VSWM…IKKY. Over 131–178 the chain is Mitochondrial matrix; the sequence is VYPLDFARTRLAADVGKGAAQREFHGLGDCIIKIFKSDGLRGLYQGFN. Lys-147 carries the post-translational modification N6-succinyllysine. Residue Cys-160 is modified to S-nitrosocysteine. A helical membrane pass occupies residues 179–199; the sequence is VSVQGIIIYRAAYFGVYDTAK. Topologically, residues 200–210 are mitochondrial intermembrane; sequence GMLPDPKNVHI. A helical membrane pass occupies residues 211–231; that stretch reads FVSWMIAQSVTAVAGLVSYPF. Over 232–273 the chain is Mitochondrial matrix; it reads DTVRRRMMMQSGRKGADIMYTGTVDCWRKIAKDEGAKAFFKG. ADP is bound at residue Arg-235. The segment at 235 to 240 is important for transport activity; that stretch reads RRRMMM. Residues 235–240 carry the Nucleotide carrier signature motif motif; it reads RRRMMM. N6-succinyllysine is present on residues Lys-245 and Lys-272. A helical transmembrane segment spans residues 274–291; that stretch reads AWSNVLRGMGGAFVLVLY. The Mitochondrial intermembrane segment spans residues 292–298; it reads DEIKKYV.

The protein belongs to the mitochondrial carrier (TC 2.A.29) family. In terms of assembly, monomer. Found in a complex with ARL2, ARL2BP and SLC25A4/ANT1. Interacts with ARL2BP. Interacts with ARHGAP11B, thereby inhibiting the mitochondrial permeability transition pore (mPTP). Interacts with TIMM44; leading to inhibit the presequence translocase TIMM23, thereby promoting stabilization of PINK1. (Microbial infection) Interacts with HIV-1 Vpr. Under cell death induction, transglutaminated by TGM2. Transglutamination leads to formation of covalent cross-links between a glutamine and the epsilon-amino group of a lysine residue, forming polymers. In terms of tissue distribution, expressed in erythrocytes (at protein level).

It localises to the mitochondrion inner membrane. Its subcellular location is the membrane. The enzyme catalyses ADP(in) + ATP(out) = ADP(out) + ATP(in). The catalysed reaction is H(+)(in) = H(+)(out). Its activity is regulated as follows. The matrix-open state (m-state) is inhibited by the membrane-permeable bongkrekic acid (BKA). The cytoplasmic-open state (c-state) is inhibited by the membrane-impermeable toxic inhibitor carboxyatractyloside (CATR). Proton transporter activity is inhibited by ADP:ATP antiporter activity. Its function is as follows. ADP:ATP antiporter that mediates import of ADP into the mitochondrial matrix for ATP synthesis, and export of ATP out to fuel the cell. Cycles between the cytoplasmic-open state (c-state) and the matrix-open state (m-state): operates by the alternating access mechanism with a single substrate-binding site intermittently exposed to either the cytosolic (c-state) or matrix (m-state) side of the inner mitochondrial membrane. In addition to its ADP:ATP antiporter activity, also involved in mitochondrial uncoupling and mitochondrial permeability transition pore (mPTP) activity. Plays a role in mitochondrial uncoupling by acting as a proton transporter: proton transport uncouples the proton flows via the electron transport chain and ATP synthase to reduce the efficiency of ATP production and cause mitochondrial thermogenesis. Proton transporter activity is inhibited by ADP:ATP antiporter activity, suggesting that SLC25A4/ANT1 acts as a master regulator of mitochondrial energy output by maintaining a delicate balance between ATP production (ADP:ATP antiporter activity) and thermogenesis (proton transporter activity). Proton transporter activity requires free fatty acids as cofactor, but does not transport it. Also plays a key role in mPTP opening, a non-specific pore that enables free passage of the mitochondrial membranes to solutes of up to 1.5 kDa, and which contributes to cell death. It is however unclear if SLC25A4/ANT1 constitutes a pore-forming component of mPTP or regulates it. Acts as a regulator of mitophagy independently of ADP:ATP antiporter activity: promotes mitophagy via interaction with TIMM44, leading to inhibit the presequence translocase TIMM23, thereby promoting stabilization of PINK1. The polypeptide is ADP/ATP translocase 1 (Homo sapiens (Human)).